The following is a 366-amino-acid chain: 3-dehydroquinate synthase (366 aa).

NAD(+)-binding positions include 75–80 (DGEQYK), 109–113 (GVIGD), 133–134 (TT), Lys146, Lys155, and 173–176 (CLST). Residues Glu188, His251, and His268 each coordinate Zn(2+).

It belongs to the sugar phosphate cyclases superfamily. Dehydroquinate synthase family. Co(2+) serves as cofactor. Zn(2+) is required as a cofactor. The cofactor is NAD(+).

It localises to the cytoplasm. It carries out the reaction 7-phospho-2-dehydro-3-deoxy-D-arabino-heptonate = 3-dehydroquinate + phosphate. Its pathway is metabolic intermediate biosynthesis; chorismate biosynthesis; chorismate from D-erythrose 4-phosphate and phosphoenolpyruvate: step 2/7. Catalyzes the conversion of 3-deoxy-D-arabino-heptulosonate 7-phosphate (DAHP) to dehydroquinate (DHQ). The sequence is that of 3-dehydroquinate synthase from Vibrio campbellii (strain ATCC BAA-1116).